A 207-amino-acid chain; its full sequence is Small ribosomal subunit protein uS4 (207 aa).

Residues 98 to 164 form the S4 RNA-binding domain; the sequence is RRLDNVVYRM…AKFKNLVEVN (67 aa).

The protein belongs to the universal ribosomal protein uS4 family. In terms of assembly, part of the 30S ribosomal subunit. Contacts protein S5. The interaction surface between S4 and S5 is involved in control of translational fidelity.

Functionally, one of the primary rRNA binding proteins, it binds directly to 16S rRNA where it nucleates assembly of the body of the 30S subunit. With S5 and S12 plays an important role in translational accuracy. The sequence is that of Small ribosomal subunit protein uS4 from Clostridioides difficile (strain 630) (Peptoclostridium difficile).